The sequence spans 1212 residues: Periplasmic/secreted acid trehalase ATH1 (1212 aa).

Topologically, residues 1-82 are cytoplasmic; the sequence is MGFKDKILFW…STRVKIRRQN (82 aa). The chain crosses the membrane as a helical span at residues 83–103; sequence ILNTTLILGMLIALVIWTAIL. Residues 104-1212 are Periplasmic-facing; it reads STNSYFSSSL…ATIREIVLQE (1109 aa). 7 N-linked (GlcNAc...) asparagine glycosylation sites follow: Asn-243, Asn-275, Asn-296, Asn-362, Asn-414, Asn-428, and Asn-521. Position 546–547 (546–547) interacts with substrate; sequence WD. N-linked (GlcNAc...) asparagine glycans are attached at residues Asn-572, Asn-601, Asn-661, and Asn-671. Glu-677 serves as the catalytic Proton donor. Asn-729 and Asn-738 each carry an N-linked (GlcNAc...) asparagine glycan. Residue 744 to 745 participates in substrate binding; the sequence is KQ. Residues Asn-912, Asn-938, Asn-993, Asn-1011, Asn-1033, Asn-1052, Asn-1070, Asn-1097, and Asn-1165 are each glycosylated (N-linked (GlcNAc...) asparagine).

The protein belongs to the glycosyl hydrolase 65 family. In terms of assembly, homodimer.

The protein resides in the secreted. The protein localises to the periplasm. It localises to the membrane. The enzyme catalyses alpha,alpha-trehalose + H2O = alpha-D-glucose + beta-D-glucose. In terms of biological role, periplasmic/secreted acid trehalase that catalyzes hydrolysis of the disaccharide trehalose and required for growth on trehalose as carbon source. Growth on trehalose is not restricted to respiration. The chain is Periplasmic/secreted acid trehalase ATH1 from Candida glabrata (Yeast).